The chain runs to 129 residues: Lysozyme C-1 (129 aa).

The C-type lysozyme domain occupies 1 to 129; that stretch reads KVFERCELAR…VSSYVEGCTL (129 aa). 4 disulfide bridges follow: Cys6-Cys127, Cys30-Cys115, Cys65-Cys81, and Cys77-Cys95. Residues Glu35 and Asp53 contribute to the active site.

It belongs to the glycosyl hydrolase 22 family. Monomer.

The catalysed reaction is Hydrolysis of (1-&gt;4)-beta-linkages between N-acetylmuramic acid and N-acetyl-D-glucosamine residues in a peptidoglycan and between N-acetyl-D-glucosamine residues in chitodextrins.. Lysozymes have primarily a bacteriolytic function; those in tissues and body fluids are associated with the monocyte-macrophage system and enhance the activity of immunoagents. The protein is Lysozyme C-1 of Capra hircus (Goat).